Reading from the N-terminus, the 372-residue chain is Steroid C26-monooxygenase (372 aa).

Cys-314 contributes to the heme binding site.

Belongs to the cytochrome P450 family. Requires heme as cofactor.

It catalyses the reaction cholest-4-en-3-one + 6 reduced [2Fe-2S]-[ferredoxin] + 3 O2 + 5 H(+) = (25R)-3-oxocholest-4-en-26-oate + 6 oxidized [2Fe-2S]-[ferredoxin] + 4 H2O. Its pathway is steroid metabolism; cholesterol degradation. Involved in the utilization of cholesterol as the sole carbon and energy source by degrading the side chain during infection. Primarily catalyzes the sequential oxidation of the terminal methyl of cholest-4-en-3-one into (25R)-26-hydroxycholest-4-en-3-one (alcohol), (25R)-26-oxocholest-4-en-3-one (aldehyde), to finally yield the carboxylic acid (25R)-3-oxocholest-4-en-26-oate. Also able to sequentially oxidize cholesterol itself, not only cholest-4-en-3-one. The polypeptide is Steroid C26-monooxygenase (cyp142) (Mycobacterium tuberculosis (strain CDC 1551 / Oshkosh)).